Reading from the N-terminus, the 717-residue chain is Trimethylamine N-oxide transport system permease protein TmoV (717 aa).

Helical transmembrane passes span 10-30, 69-89, 120-140, 153-173, 175-195, 206-226, 238-258, 265-285, 319-339, 355-375, 402-422, 452-472, 488-508, 527-547, 574-594, 643-663, and 683-703; these read FFQWLFLLIVFFSLCFAIEVP, LPPLLGWLPIWINDSLFFLMN, FMTFLIELIREILLGGVETIV, WAELPGLPWTIVTAGAVILGY, LSGKGLALFAGLVMIYISVFG, FILVAAPLSFLFGLTFGVMAF, ILLVMQTMPQYAVLVPAIVLF, AVIITMVVAVPPMILLTLLGL, ILIGVNQVIMVCFSMAVISAF, QLNIGLALEAGLCISLIAILL, ILFFAAAVILGIIFSYLGSFY, IWDTFFHTLKIFNTWLIVDVL, LVLVIGAGYIIGGIRSALVVG, LYMATFGVFISTIIGFTVGII, LIPVMMLFGVTDTSVLIAVIV, MLGLNQTIVFALFMVIIGAFI, and GIGLTLGLCVAFIGLIFDHLI. One can recognise an ABC transmembrane type-1 1 domain in the interval 200-379; sequence SMQTLSFILV…LIAILLDKMS (180 aa). An ABC transmembrane type-1 2 domain is found at 523-703; it reads ALVTLYMATF…FIGLIFDHLI (181 aa).

The protein belongs to the binding-protein-dependent transport system permease family. The complex is probably composed of two ATP-binding proteins (TmoW), two transmembrane proteins (TmoV) and a solute-binding protein (TmoX).

It is found in the cell inner membrane. Part of the ABC transporter complex TmoXWV involved in trimethylamine N-oxide (TMAO) import. Responsible for the translocation of the substrate across the membrane. This is Trimethylamine N-oxide transport system permease protein TmoV from Pelagibacter ubique (strain HTCC1062).